We begin with the raw amino-acid sequence, 593 residues long: UvrABC system protein C (593 aa).

A GIY-YIG domain is found at 14-91 (DSPGCYLHKD…IQENMPKYNI (78 aa)). Residues 196–231 (NKIVNGLTEKMKSAAMTMEFERAAEYRDLIEAISLL) form the UVR domain.

Belongs to the UvrC family. Interacts with UvrB in an incision complex.

It is found in the cytoplasm. The UvrABC repair system catalyzes the recognition and processing of DNA lesions. UvrC both incises the 5' and 3' sides of the lesion. The N-terminal half is responsible for the 3' incision and the C-terminal half is responsible for the 5' incision. The protein is UvrABC system protein C of Streptococcus agalactiae serotype Ia (strain ATCC 27591 / A909 / CDC SS700).